A 76-amino-acid polypeptide reads, in one-letter code: Small ribosomal subunit protein bS18 (76 aa).

The protein belongs to the bacterial ribosomal protein bS18 family. In terms of assembly, part of the 30S ribosomal subunit. Forms a tight heterodimer with protein bS6.

Its function is as follows. Binds as a heterodimer with protein bS6 to the central domain of the 16S rRNA, where it helps stabilize the platform of the 30S subunit. The polypeptide is Small ribosomal subunit protein bS18 (Alkaliphilus metalliredigens (strain QYMF)).